Consider the following 316-residue polypeptide: Probable cell division protein WhiA (316 aa).

Positions 277–310 (SLEQLGRLADPPITKDAIAGRIRRLLQLAEKTEK) form a DNA-binding region, H-T-H motif.

Belongs to the WhiA family.

Its function is as follows. Involved in cell division and chromosome segregation. The chain is Probable cell division protein WhiA from Bifidobacterium adolescentis (strain ATCC 15703 / DSM 20083 / NCTC 11814 / E194a).